We begin with the raw amino-acid sequence, 352 residues long: Chorismate synthase (352 aa).

Arginine 48 is a binding site for NADP(+). Residues 125-127 (RSS), 238-239 (NA), glycine 278, 293-297 (KPTSS), and arginine 319 each bind FMN.

This sequence belongs to the chorismate synthase family. As to quaternary structure, homotetramer. FMNH2 is required as a cofactor.

The catalysed reaction is 5-O-(1-carboxyvinyl)-3-phosphoshikimate = chorismate + phosphate. The protein operates within metabolic intermediate biosynthesis; chorismate biosynthesis; chorismate from D-erythrose 4-phosphate and phosphoenolpyruvate: step 7/7. Functionally, catalyzes the anti-1,4-elimination of the C-3 phosphate and the C-6 proR hydrogen from 5-enolpyruvylshikimate-3-phosphate (EPSP) to yield chorismate, which is the branch point compound that serves as the starting substrate for the three terminal pathways of aromatic amino acid biosynthesis. This reaction introduces a second double bond into the aromatic ring system. The sequence is that of Chorismate synthase from Legionella pneumophila (strain Lens).